We begin with the raw amino-acid sequence, 788 residues long: Integrin beta-6 (788 aa).

A signal peptide spans Met1–Gly21. The PSI domain occupies Gly22–Gln71. Over Gly22–Pro709 the chain is Extracellular. 19 disulfide bridges follow: Cys23–Cys41, Cys31–Cys454, Cys34–Cys59, Cys44–Cys70, Cys197–Cys204, Cys252–Cys293, Cys394–Cys406, Cys426–Cys452, Cys456–Cys476, Cys467–Cys479, Cys481–Cys490, Cys492–Cys519, Cys502–Cys517, Cys511–Cys522, Cys524–Cys537, Cys539–Cys560, Cys544–Cys558, Cys552–Cys563, and Cys565–Cys574. N-linked (GlcNAc...) asparagine glycosylation is found at Asn48 and Asn97. In terms of domain architecture, VWFA spans Tyr131–Leu371. Positions 140, 142, and 144 each coordinate Mg(2+). Ca(2+) is bound by residues Ser144, Asp147, Asp148, and Glu179. Ca(2+) contacts are provided by Asn235, Asp237, Pro239, and Glu240. Glu240 provides a ligand contact to Mg(2+). Asn260 carries an N-linked (GlcNAc...) asparagine glycan. Ca(2+)-binding residues include Asp271 and Lys355. The N-linked (GlcNAc...) asparagine glycan is linked to Asn387. Asn418 carries an N-linked (GlcNAc...) asparagine glycan. 4 consecutive I-EGF domains span residues Cys456–Glu491, Cys492–Gln538, Cys539–Asn575, and Cys576–Glu615. Residues Asn463 and Asn471 are each glycosylated (N-linked (GlcNAc...) asparagine). N-linked (GlcNAc...) asparagine glycosylation occurs at Asn541. An N-linked (GlcNAc...) asparagine glycan is attached at Asn575. 9 disulfides stabilise this stretch: Cys576-Cys599, Cys583-Cys597, Cys591-Cys602, Cys604-Cys614, Cys617-Cys620, Cys624-Cys670, Cys630-Cys649, Cys633-Cys645, and Cys678-Cys702. The chain crosses the membrane as a helical span at residues Met710–Trp730. Positions Lys731 to Thr758 are interaction with HAX1. Residues Lys731–Gly788 are Cytoplasmic-facing.

The protein belongs to the integrin beta chain family. In terms of assembly, heterodimer of an alpha and a beta subunit. Interacts with FLNB. Interacts with HAX1. ITGAV:ITGB6 interacts with FBN1. ITGAV:ITGB6 interacts with TGFB1.

Its subcellular location is the cell membrane. The protein localises to the cell junction. It localises to the focal adhesion. Integrin alpha-V:beta-6 (ITGAV:ITGB6) is a receptor for fibronectin and cytotactin. It recognizes the sequence R-G-D in its ligands. ITGAV:ITGB6 acts as a receptor for fibrillin-1 (FBN1) and mediates R-G-D-dependent cell adhesion to FBN1. Integrin alpha-V:beta-6 (ITGAV:ITGB6) mediates R-G-D-dependent release of transforming growth factor beta-1 (TGF-beta-1) from regulatory Latency-associated peptide (LAP), thereby playing a key role in TGF-beta-1 activation. This Bos taurus (Bovine) protein is Integrin beta-6 (ITGB6).